Here is a 258-residue protein sequence, read N- to C-terminus: Alcohol dehydrogenase 2 (258 aa).

9–33 lines the NAD(+) pocket; that stretch reads IFVGGLGFIGYEACKQLMAKNMASF. S137 lines the substrate pocket. The Proton acceptor role is filled by Y150.

This sequence belongs to the short-chain dehydrogenases/reductases (SDR) family. Homodimer.

It catalyses the reaction a primary alcohol + NAD(+) = an aldehyde + NADH + H(+). The catalysed reaction is a secondary alcohol + NAD(+) = a ketone + NADH + H(+). This Ceratitis cosyra (Mango fruit fly) protein is Alcohol dehydrogenase 2 (ADH2).